The sequence spans 470 residues: Acetyl-CoA decarbonylase/synthase complex subunit gamma 2 (470 aa).

Positions 1-60 (MKINSPLEAYKYLPQTNCGECGQPTCMAFASTLIDRSGKTTDCPPLIKEKKFAKKLAELD) constitute a 4Fe-4S domain. 4 residues coordinate [4Fe-4S] cluster: C18, C21, C26, and C43.

Heterodimer of delta and gamma chains. The ACDS complex is made up of alpha, epsilon, beta, gamma and delta chains with a probable stoichiometry of (alpha(2)epsilon(2))(4)-beta(8)-(gamma(1)delta(1))(8). It depends on corrinoid as a cofactor. [4Fe-4S] cluster serves as cofactor.

The enzyme catalyses 5,6,7,8-tetrahydrosarcinapterin + methyl-Co(III)-[corrinoid Fe-S protein] = 5-methyltetrahydrosarcinapterin + Co(I)-[corrinoid Fe-S protein] + H(+). The protein operates within one-carbon metabolism; methanogenesis from acetate. Functionally, part of a complex that catalyzes the reversible cleavage of acetyl-CoA, allowing growth on acetate as sole source of carbon and energy. The polypeptide is Acetyl-CoA decarbonylase/synthase complex subunit gamma 2 (Methanosarcina mazei (strain ATCC BAA-159 / DSM 3647 / Goe1 / Go1 / JCM 11833 / OCM 88) (Methanosarcina frisia)).